A 156-amino-acid polypeptide reads, in one-letter code: ATP synthase subunit b (156 aa).

Residues 12–32 (IAFAIFVWFCVKYVWPPITAA) form a helical membrane-spanning segment.

The protein belongs to the ATPase B chain family. In terms of assembly, F-type ATPases have 2 components, F(1) - the catalytic core - and F(0) - the membrane proton channel. F(1) has five subunits: alpha(3), beta(3), gamma(1), delta(1), epsilon(1). F(0) has three main subunits: a(1), b(2) and c(10-14). The alpha and beta chains form an alternating ring which encloses part of the gamma chain. F(1) is attached to F(0) by a central stalk formed by the gamma and epsilon chains, while a peripheral stalk is formed by the delta and b chains.

The protein localises to the cell inner membrane. Functionally, f(1)F(0) ATP synthase produces ATP from ADP in the presence of a proton or sodium gradient. F-type ATPases consist of two structural domains, F(1) containing the extramembraneous catalytic core and F(0) containing the membrane proton channel, linked together by a central stalk and a peripheral stalk. During catalysis, ATP synthesis in the catalytic domain of F(1) is coupled via a rotary mechanism of the central stalk subunits to proton translocation. Component of the F(0) channel, it forms part of the peripheral stalk, linking F(1) to F(0). The chain is ATP synthase subunit b from Marinobacter nauticus (strain ATCC 700491 / DSM 11845 / VT8) (Marinobacter aquaeolei).